The sequence spans 447 residues: UPF0210 protein lhv_0606 (447 aa).

The protein belongs to the UPF0210 family. Homodimer.

The protein is UPF0210 protein lhv_0606 of Lactobacillus helveticus (strain DPC 4571).